The chain runs to 3106 residues: Cilia- and flagella-associated protein 54 (3106 aa).

Low complexity-rich tracts occupy residues 1–24, 34–48, and 2356–2368; these read MASS…VSPV, STAV…KSSS, and ESCS…TSTT. Disordered regions lie at residues 1–58 and 2354–2374; these read MASS…THSE and PEES…KDDS.

It belongs to the CFAP54 family. As to expression, expressed at high level in the testis and at a low level in the lung and brain.

Its subcellular location is the cytoplasm. It localises to the cytoskeleton. The protein localises to the cilium axoneme. Functionally, required for assembly and function of cilia and flagella. The protein is Cilia- and flagella-associated protein 54 of Mus musculus (Mouse).